Consider the following 316-residue polypeptide: Lys-63-specific deubiquitinase BRCC36 (316 aa).

The residue at position 2 (Ala-2) is an N-acetylalanine. The MPN domain maps to 12–179 (VHLESDAFLV…YTCFQSIQAQ (168 aa)). Zn(2+) is bound by residues His-122, His-124, and Asp-135. The short motif at 122–135 (HSHPHITVWPSHVD) is the JAMM motif element. Ser-258 bears the Phosphoserine mark.

Belongs to the peptidase M67A family. BRCC36 subfamily. As to quaternary structure, component of the ARISC complex, at least composed of UIMC1/RAP80, ABRAXAS1, BRCC3/BRCC36, BABAM2 and BABAM1/NBA1. Component of the BRCA1-A complex, at least composed of BRCA1, BARD1, UIMC1/RAP80, ABRAXAS1, BRCC3/BRCC36, babam2 and BABAM1/NBA1. In the BRCA1-A complex, interacts directly with ABRAXAS1 and babam2. Component of the BRISC complex, at least composed of ABRAXAS2, BRCC3/BRCC36, BABAM2 and BABAM1/NBA1. Identified in a complex with SHMT2 and the other subunits of the BRISC complex. In the BRISC complex, interacts directly with ABRAXAS2. Identified in a complex with ABRAXAS2 and NUMA1. The BRISC complex interacts with the CSN complex. Component of the BRCA1/BRCA2 containing complex (BRCC), which also contains BRCA1, BRCA2, BARD1, BABAM2 and RAD51. BRCC is a ubiquitin E3 ligase complex that enhances cellular survival following DNA damage. Interacts with BRCA1. Binds polyubiquitin. Interacts with PWWP2B. Interacts with HDAC1; this interaction is enhanced in the presence of PWWP2B. Requires Zn(2+) as cofactor. In terms of tissue distribution, heart, brain, placenta, lung, liver, skeletal muscle, kidney and pancreas. Aberrantly expressed in the vast majority of breast tumors.

Its subcellular location is the nucleus. The protein localises to the cytoplasm. It is found in the cytoskeleton. The protein resides in the spindle pole. In terms of biological role, metalloprotease that specifically cleaves 'Lys-63'-linked polyubiquitin chains. Does not have activity toward 'Lys-48'-linked polyubiquitin chains. Component of the BRCA1-A complex, a complex that specifically recognizes 'Lys-63'-linked ubiquitinated histones H2A and H2AX at DNA lesions sites, leading to target the BRCA1-BARD1 heterodimer to sites of DNA damage at double-strand breaks (DSBs). In the BRCA1-A complex, it specifically removes 'Lys-63'-linked ubiquitin on histones H2A and H2AX, antagonizing the RNF8-dependent ubiquitination at double-strand breaks (DSBs). Catalytic subunit of the BRISC complex, a multiprotein complex that specifically cleaves 'Lys-63'-linked ubiquitin in various substrates. Mediates the specific 'Lys-63'-specific deubiquitination associated with the COP9 signalosome complex (CSN), via the interaction of the BRISC complex with the CSN complex. The BRISC complex is required for normal mitotic spindle assembly and microtubule attachment to kinetochores via its role in deubiquitinating NUMA1. Plays a role in interferon signaling via its role in the deubiquitination of the interferon receptor IFNAR1; deubiquitination increases IFNAR1 activity by enhancing its stability and cell surface expression. Acts as a regulator of the NLRP3 inflammasome by mediating deubiquitination of NLRP3, leading to NLRP3 inflammasome assembly. Down-regulates the response to bacterial lipopolysaccharide (LPS) via its role in IFNAR1 deubiquitination. Deubiquitinates HDAC1 and PWWP2B leading to their stabilization. This is Lys-63-specific deubiquitinase BRCC36 (BRCC3) from Homo sapiens (Human).